A 286-amino-acid polypeptide reads, in one-letter code: Aminoglycoside N(3)-acetyltransferase III (286 aa).

It belongs to the antibiotic N-acetyltransferase family.

It carries out the reaction a 2-deoxystreptamine antibiotic + acetyl-CoA = an N(3)-acetyl-2-deoxystreptamine antibiotic + CoA + H(+). Resistance to antibiotics containing the 2-deoxy-streptamine ring including gentamicin, kanamycin, tobramycin, neomycin and apramycin. In Salmonella sp, this protein is Aminoglycoside N(3)-acetyltransferase III (aacC3).